A 434-amino-acid chain; its full sequence is Methylenetetrahydrofolate--tRNA-(uracil-5-)-methyltransferase TrmFO (434 aa).

Residue 9 to 14 participates in FAD binding; sequence GAGLAG.

It belongs to the MnmG family. TrmFO subfamily. FAD serves as cofactor.

It is found in the cytoplasm. It carries out the reaction uridine(54) in tRNA + (6R)-5,10-methylene-5,6,7,8-tetrahydrofolate + NADH + H(+) = 5-methyluridine(54) in tRNA + (6S)-5,6,7,8-tetrahydrofolate + NAD(+). The enzyme catalyses uridine(54) in tRNA + (6R)-5,10-methylene-5,6,7,8-tetrahydrofolate + NADPH + H(+) = 5-methyluridine(54) in tRNA + (6S)-5,6,7,8-tetrahydrofolate + NADP(+). Its function is as follows. Catalyzes the folate-dependent formation of 5-methyl-uridine at position 54 (M-5-U54) in all tRNAs. This chain is Methylenetetrahydrofolate--tRNA-(uracil-5-)-methyltransferase TrmFO, found in Listeria welshimeri serovar 6b (strain ATCC 35897 / DSM 20650 / CCUG 15529 / CIP 8149 / NCTC 11857 / SLCC 5334 / V8).